Here is a 265-residue protein sequence, read N- to C-terminus: Non-structural protein 2a (265 aa).

This sequence belongs to the coronaviruses ns2a protein family.

Its subcellular location is the host cytoplasm. Its function is as follows. Not essential for virus replication in transformed murine cells. The sequence is that of Non-structural protein 2a from Mus musculus (Mouse).